Reading from the N-terminus, the 355-residue chain is uncharacterized protein (355 aa).

Disordered stretches follow at residues 1 to 121 (MPID…MELR), 226 to 253 (RLMNSEEREAQDLKDAEASRRGKKKSSM), and 336 to 355 (NLHRLGGLHSDSPLSKRKRT). The segment covering 24–37 (LESESSSESDYEEV) has biased composition (acidic residues). Residues 65–87 (ETKTSSNFQNINPVQTIDNSASE) are compositionally biased toward polar residues. Low complexity predominate over residues 91 to 105 (DASSAEGGSNSAASS). Acidic residues predominate over residues 106–117 (SEEEDSSDSEYE). A compositionally biased stretch (basic and acidic residues) spans 226 to 245 (RLMNSEEREAQDLKDAEASR).

This is an uncharacterized protein from Schizosaccharomyces pombe (strain 972 / ATCC 24843) (Fission yeast).